The chain runs to 153 residues: Allergen Pet c 1 (153 aa).

The protein belongs to the BetVI family. As to quaternary structure, may form dimers.

This Petroselinum crispum (Parsley) protein is Allergen Pet c 1.